The sequence spans 238 residues: Small ribosomal subunit protein eS4 (238 aa).

Residues 38-100 (LPLAIVIRDV…TGEVYRVVPD (63 aa)) form the S4 RNA-binding domain.

It belongs to the eukaryotic ribosomal protein eS4 family.

The protein is Small ribosomal subunit protein eS4 of Pyrobaculum arsenaticum (strain DSM 13514 / JCM 11321 / PZ6).